The following is a 448-amino-acid chain: MCYYRYVQVHSIWRRFCALGLLVPFLLLLFSCTNTVGYGVLQWSLPDLGLSTGDILPVYVRSNVSQVYIVEIQKKKVELPFWQLKLCRTKKEALQYAERLREYRYSYATSVLDGLPLREGPENTAPQVYRLREGQAVKLLWKGTGKAVYRGENRLEGDWFKVMTEDGTTGWCFSHGLSLFDERESRPTVRETDDLARDRDLQHVLNSAWYPEYYRTMVEQRRIDLEKMASGWGLFVGEKKGLARIELPDAHYAFPYSRLVKTGSNGYLFDGSSLSIYVRDAHTLAAQFTDEAGRLRIERFVTLEKTPEEIIAEEQLRRSALLEHVCTPGLRLHSEIYGTLSFTERNVFTWTGARALSPALIPAGAGSTGRVALRCFIDQSLKSEYEGVLSFDFDSAQEWVHFLYLRTPGGLKLEHIDSTHLKDATVLRRSVSPVVLYFAPEGHAEPQP.

The chain crosses the membrane as a helical span at residues 19-41; the sequence is LGLLVPFLLLLFSCTNTVGYGVL. In terms of domain architecture, SH3b spans 105–181; it reads YSYATSVLDG…CFSHGLSLFD (77 aa).

Its subcellular location is the membrane. This is an uncharacterized protein from Treponema pallidum (strain Nichols).